A 220-amino-acid polypeptide reads, in one-letter code: Ras-related protein Rab-3A (220 aa).

Positions 31, 32, 33, 34, 35, 36, 37, 48, 49, 53, and 54 each coordinate GTP. Thr-36 contacts Mg(2+). Residues 49–58 carry the Switch 1 motif; it reads PAFVSTVGID. Positions 54 and 77 each coordinate Mg(2+). GTP is bound at residue Gly-80. The short motif at 80-96 is the Switch 2 element; it reads GQERYRTITTAYYRGAM. Thr-86 carries the phosphothreonine modification. GTP-binding residues include Asn-135, Lys-136, Asp-138, Ala-166, and Lys-167. Phosphoserine occurs at positions 188 and 190. Residues 194–220 form a disordered region; the sequence is ADPAVTGAKQGPQLTDQQAPPHQDCAC. S-geranylgeranyl cysteine attachment occurs at residues Cys-218 and Cys-220. At Cys-220 the chain carries Cysteine methyl ester.

It belongs to the small GTPase superfamily. Rab family. Interacts with RIMS1 and RIMS2. Interacts with Rabphilin-3A/RPH3A and Rab effector Noc2/RPH3AL. Interacts with SYTL4. Interacts with RAB3IP. Interacts with SGSM1 and SGSM3. Interacts with SYT1. Interacts with MYH9; this interaction is essential for lysosome exocytosis and plasma membrane repair. Interacts with STXBP1; this interaction promotes RAB3A dissociation from the vesicle membrane. Interacts with SNCA. Interacts with GDI1, GDI2, CHM and CHML; phosphorylation at Thr-86 disrupts these interactions. Interacts with MADD (via uDENN domain); the GTP-bound form is preferred for interaction. Mg(2+) serves as cofactor. Phosphorylation of Thr-86 in the switch II region by LRRK2 prevents the association of RAB regulatory proteins, including CHM, CHML and RAB GDP dissociation inhibitors GDI1 and GDI2. Specifically expressed in brain.

It is found in the cytoplasm. The protein localises to the cytosol. Its subcellular location is the lysosome. It localises to the cytoplasmic vesicle. The protein resides in the secretory vesicle. It is found in the cell projection. The protein localises to the axon. Its subcellular location is the cell membrane. It localises to the presynapse. The protein resides in the postsynapse. The catalysed reaction is GTP + H2O = GDP + phosphate + H(+). Regulated by guanine nucleotide exchange factors (GEFs) including RAB3IL1 and MADD which promote the exchange of bound GDP for free GTP. Regulated by GTPase activating proteins (GAPs) including RAB3GAP1 and TBC1D10B which increase the GTP hydrolysis activity. Inhibited by GDP dissociation inhibitors (GDIs) which prevent Rab-GDP dissociation. Its function is as follows. The small GTPases Rab are key regulators of intracellular membrane trafficking, from the formation of transport vesicles to their fusion with membranes. Rabs cycle between an inactive GDP-bound form and an active GTP-bound form that is able to recruit to membranes different sets of downstream effectors directly responsible for vesicle formation, movement, tethering and fusion. RAB3A plays a central role in regulated exocytosis and secretion. Controls the recruitment, tethering and docking of secretory vesicles to the plasma membrane. Upon stimulation, switches to its active GTP-bound form, cycles to vesicles and recruits effectors such as RIMS1, RIMS2, Rabphilin-3A/RPH3A, RPH3AL or SYTL4 to help the docking of vesicules onto the plasma membrane. Upon GTP hydrolysis by GTPase-activating protein, dissociates from the vesicle membrane allowing the exocytosis to proceed. Stimulates insulin secretion through interaction with RIMS2 or RPH3AL effectors in pancreatic beta cells. Regulates calcium-dependent lysosome exocytosis and plasma membrane repair (PMR) via the interaction with 2 effectors, SYTL4 and myosin-9/MYH9. Acts as a positive regulator of acrosome content secretion in sperm cells by interacting with RIMS1. Also plays a role in the regulation of dopamine release by interacting with synaptotagmin I/SYT. The chain is Ras-related protein Rab-3A (RAB3A) from Bos taurus (Bovine).